The sequence spans 108 residues: Abdominal ganglion neuropeptide R3-14 (108 aa).

A signal peptide spans 1–23 (MQVLHLCLAVSIAVALLSQAAWS). E24 and E52 each carry pyrrolidone carboxylic acid (Glu); partial. At Q66 the chain carries Pyrrolidone carboxylic acid.

The partial formation of pyroglutamate from N-terminal glutamic acid in peptides isolated from single cells is detected by mass spectrometry. There are indications this modification depends on a heat sensitive factor. In terms of tissue distribution, neurons R3-R14. A cluster of 12 giant neurons located on the right side of the abdominal ganglion.

It localises to the secreted. HRBP is a myoactive peptide that excites Aplysia heart and enhances gut motility in vitro. The sequence is that of Abdominal ganglion neuropeptide R3-14 from Aplysia californica (California sea hare).